Reading from the N-terminus, the 299-residue chain is Acetylglutamate kinase (299 aa).

Residues 70 to 71 (GG), Arg92, and Asn186 each bind substrate.

Belongs to the acetylglutamate kinase family. ArgB subfamily.

It localises to the cytoplasm. It catalyses the reaction N-acetyl-L-glutamate + ATP = N-acetyl-L-glutamyl 5-phosphate + ADP. It functions in the pathway amino-acid biosynthesis; L-arginine biosynthesis; N(2)-acetyl-L-ornithine from L-glutamate: step 2/4. Functionally, catalyzes the ATP-dependent phosphorylation of N-acetyl-L-glutamate. This chain is Acetylglutamate kinase, found in Thermoanaerobacter pseudethanolicus (strain ATCC 33223 / 39E) (Clostridium thermohydrosulfuricum).